The chain runs to 78 residues: MKTSVLVTVLGLAVISVLCSASQDEEQDMYDELLSAVFEVNDELQSEARCGEKNDRCKTNQDCCSGFRCTKFRRCGRR.

Positions 1 to 21 (MKTSVLVTVLGLAVISVLCSA) are cleaved as a signal peptide. Positions 22–49 (SQDEEQDMYDELLSAVFEVNDELQSEAR) are excised as a propeptide. Cystine bridges form between Cys-50–Cys-64, Cys-57–Cys-69, and Cys-63–Cys-75.

Belongs to the neurotoxin 10 (Hwtx-1) family. 64 (Jztx-20) subfamily. In terms of tissue distribution, expressed by the venom gland.

The protein localises to the secreted. Probable ion channel inhibitor. In Chilobrachys guangxiensis (Chinese earth tiger tarantula), this protein is U23-theraphotoxin-Cg1a 1.